The chain runs to 254 residues: Phosphoglycerate mutase 1 (254 aa).

Substrate-binding positions include 10–17 (RHGESAWN) and 23–24 (SG). Histidine 11 (tele-phosphohistidine intermediate) is an active-site residue. Serine 14 and serine 23 each carry phosphoserine. At tyrosine 26 the chain carries Phosphotyrosine. Serine 31 carries the post-translational modification Phosphoserine. Substrate is bound by residues arginine 62, 89 to 92 (ERHY), and lysine 100. Glutamate 89 acts as the Proton donor/acceptor in catalysis. Lysine 106 carries the post-translational modification N6-acetyllysine. A substrate-binding site is contributed by 116–117 (RR). Serine 118 is modified (phosphoserine). 187–188 (GN) is a substrate binding site. Lysine 251 is modified (N6-acetyllysine; alternate). Residue lysine 251 is modified to N6-succinyllysine; alternate. An N6-acetyllysine mark is found at lysine 253 and lysine 254.

The protein belongs to the phosphoglycerate mutase family. BPG-dependent PGAM subfamily. Homodimer. Post-translationally, acetylated at Lys-253, Lys-253 and Lys-254 under high glucose condition. Acetylation increases catalytic activity. Under glucose restriction SIRT1 levels dramatically increase and it deacetylates the enzyme.

It carries out the reaction (2R)-2-phosphoglycerate = (2R)-3-phosphoglycerate. It catalyses the reaction (2R)-3-phospho-glyceroyl phosphate = (2R)-2,3-bisphosphoglycerate + H(+). In terms of biological role, catalyzes the interconversion of 2-phosphoglycerate and 3-phosphoglyceratea crucial step in glycolysis, by using 2,3-bisphosphoglycerate. Also catalyzes the interconversion of (2R)-2,3-bisphosphoglycerate and (2R)-3-phospho-glyceroyl phosphate. The chain is Phosphoglycerate mutase 1 from Mus musculus (Mouse).